We begin with the raw amino-acid sequence, 433 residues long: Monodehydroascorbate reductase (433 aa).

FAD-binding positions include 13–16 (GGVS), Glu40, Arg47, Lys52, Ile95, and 146–147 (RE). NAD(+)-binding positions include 171–177 (GGYIGLE), Glu195, Arg201, and Gly260. 173–177 (YIGLE) contacts NADP(+). Residues Arg201 and Gly260 each coordinate NADP(+). Asp297 contacts FAD. An NAD(+)-binding site is contributed by 313-314 (EH). 313 to 314 (EH) contacts NADP(+). FAD is bound at residue Val315. Arg319 serves as a coordination point for L-ascorbate. Residue Tyr348 coordinates FAD. Tyr348 is an NAD(+) binding site. Tyr348 contributes to the NADP(+) binding site. Arg350 is a binding site for L-ascorbate.

This sequence belongs to the FAD-dependent oxidoreductase family. Requires FAD as cofactor. As to expression, expressed in leaves, and to a lesser degree in stems, roots and all stages of fruit.

The protein localises to the cytoplasm. The catalysed reaction is 2 monodehydro-L-ascorbate radical + NADH + H(+) = 2 L-ascorbate + NAD(+). Catalyzes the conversion of monodehydroascorbate to ascorbate, oxidizing NADH in the process. The sequence is that of Monodehydroascorbate reductase from Solanum lycopersicum (Tomato).